We begin with the raw amino-acid sequence, 432 residues long: Adenylosuccinate synthetase (432 aa).

Residues 12–18 (GDEGKGK) and 40–42 (GHT) each bind GTP. Asp13 serves as the catalytic Proton acceptor. Mg(2+)-binding residues include Asp13 and Gly40. IMP-binding positions include 13–16 (DEGK), 38–41 (NAGH), Thr129, Arg143, Gln224, Thr239, and Arg303. The active-site Proton donor is the His41. Position 299–305 (299–305 (VTTGRRR)) interacts with substrate. GTP is bound by residues Arg305, 331-333 (KLD), and 413-415 (GVG).

Belongs to the adenylosuccinate synthetase family. Homodimer. Requires Mg(2+) as cofactor.

It localises to the cytoplasm. The catalysed reaction is IMP + L-aspartate + GTP = N(6)-(1,2-dicarboxyethyl)-AMP + GDP + phosphate + 2 H(+). It functions in the pathway purine metabolism; AMP biosynthesis via de novo pathway; AMP from IMP: step 1/2. Functionally, plays an important role in the de novo pathway of purine nucleotide biosynthesis. Catalyzes the first committed step in the biosynthesis of AMP from IMP. In Mycobacterium avium (strain 104), this protein is Adenylosuccinate synthetase.